The primary structure comprises 246 residues: Osmotin-like protein TPM-1 (246 aa).

Residues methionine 1–alanine 21 form the signal peptide. Disulfide bonds link cysteine 30–cysteine 225, cysteine 72–cysteine 82, cysteine 87–cysteine 93, cysteine 141–cysteine 213, cysteine 146–cysteine 196, cysteine 154–cysteine 164, cysteine 168–cysteine 177, and cysteine 178–cysteine 183.

It belongs to the thaumatin family.

Its subcellular location is the vacuole. It catalyses the reaction Endohydrolysis of (1-&gt;3)- or (1-&gt;4)-linkages in beta-D-glucans when the glucose residue whose reducing group is involved in the linkage to be hydrolyzed is itself substituted at C-3.. Antifungal protein that inhibits the growth of several phytopathogenic fungi (e.g. Trichothecium roseum, Fusarium oxysporum, Phytophthora citrophthora and Colletotrichum coccodes). May bind to beta-glucans and have beta-1,3-D-glucanase activity. The sequence is that of Osmotin-like protein TPM-1 from Solanum lycopersicum (Tomato).